Reading from the N-terminus, the 467-residue chain is Glutamate--tRNA ligase (467 aa).

Positions 9-19 (PSPTGFLHIGG) match the 'HIGH' region motif. The 'KMSKS' region signature appears at 241–245 (KLSKR). Residue lysine 244 coordinates ATP.

It belongs to the class-I aminoacyl-tRNA synthetase family. Glutamate--tRNA ligase type 1 subfamily. In terms of assembly, monomer.

It is found in the cytoplasm. It catalyses the reaction tRNA(Glu) + L-glutamate + ATP = L-glutamyl-tRNA(Glu) + AMP + diphosphate. In terms of biological role, catalyzes the attachment of glutamate to tRNA(Glu) in a two-step reaction: glutamate is first activated by ATP to form Glu-AMP and then transferred to the acceptor end of tRNA(Glu). The chain is Glutamate--tRNA ligase from Methylobacillus flagellatus (strain ATCC 51484 / DSM 6875 / VKM B-1610 / KT).